Here is a 606-residue protein sequence, read N- to C-terminus: Cryptochrome-1 (606 aa).

Residues V3–L132 enclose the Photolyase/cryptochrome alpha/beta domain. K11 participates in a covalent cross-link: Glycyl lysine isopeptide (Lys-Gly) (interchain with G-Cter in ubiquitin). The LIR 1 motif lies at N50 to F54. S71 is subject to Phosphoserine; by AMPK. The short motif at D82–L87 is the LIR 2 element. K107 is covalently cross-linked (Glycyl lysine isopeptide (Lys-Gly) (interchain with G-Cter in ubiquitin)). The short motif at K151–L156 is the LIR 3 element. K159 participates in a covalent cross-link: Glycyl lysine isopeptide (Lys-Gly) (interchain with G-Cter in ubiquitin). Position 247 is a phosphoserine; by MAPK (S247). An FAD-binding site is contributed by S252. 2 consecutive short sequence motifs (LIR) follow at residues L255 to L260 and D271 to V276. S280 is modified (phosphoserine; by AMPK). Residues S285–L290 carry the LIR 6 motif. Q289 serves as a coordination point for FAD. Residue K329 forms a Glycyl lysine isopeptide (Lys-Gly) (interchain with G-Cter in ubiquitin) linkage. The LIR 7 signature appears at T335–W339. H355 is an FAD binding site. The required for inhibition of CLOCK-BMAL1-mediated transcription stretch occupies residues W371 to M470. The LIR 8 signature appears at K379–L384. D387 to D389 contacts FAD. Short sequence motifs (LIR) lie at residues G395 to L400, H411 to V416, and R430 to V435. Residues V471–R493 form an interaction with TIMELESS region. Residue K485 forms a Glycyl lysine isopeptide (Lys-Gly) (interchain with G-Cter in ubiquitin) linkage. 2 consecutive short sequence motifs (LIR) follow at residues Q486–L491 and S492–L497. Residues Y559–N606 are disordered. The span at D563–R586 shows a compositional bias: polar residues. A Glycyl lysine isopeptide (Lys-Gly) (interchain with G-Cter in ubiquitin) cross-link involves residue K585. The residue at position 588 (S588) is a Phosphoserine.

The protein belongs to the DNA photolyase class-1 family. Component of the circadian core oscillator, which includes the CRY proteins, CLOCK or NPAS2, BMAL1 or BMAL2, CSNK1D and/or CSNK1E, TIMELESS, and the PER proteins. Interacts directly with TIMELESS. Interacts directly with PER1 and PER2; interaction with PER2 inhibits its ubiquitination and vice versa. Interacts with PER3. Interacts with FBXL21. Interacts with FBXL3. Interacts with PPP5C (via TPR repeats). Interacts with CLOCK-BMAL1 independently of PER2 and DNA. Interacts with HDAC1, HDAC2 and SIN3B. Interacts with nuclear receptors AR, NR1D1, NR3C1/GR, RORA and RORC; the interaction with at least NR3C1/GR is ligand dependent. Interacts with PRKDC. Interacts with the G protein subunit alpha GNAS; the interaction may block GPCR-mediated regulation of cAMP concentrations. Interacts with PRMT5. Interacts with EZH2. Interacts with MYBBP1A, DOCK7, HNRNPU, RPL7A, RPL8 and RPS3. Interacts with MAP1LC3B. Interacts with CLOCK. Interacts with BMAL1. Interacts weakly with HDAC3; this interaction is enhanced in the presence of FBXL3. Interacts with TRIM28, KCTD5 and DDB1. Interacts with DTL. Interacts with DDB1-CUL4A complex. Interacts with FOXO1. Interacts with PSMD2 in a KDM8-dependent manner. Interacts with KDM8 in a FBXL3-dependent manner. Interacts with PPARA. Interacts with PPARG in a ligand-dependent manner. Interacts with PPARD (via domain NR LBD) in a ligand-dependent manner. Interacts with NR1I2 (via domain NR LBD) in a ligand-dependent manner. Interacts with NR1I3, VDR and HNF4A. The cofactor is FAD. Requires (6R)-5,10-methylene-5,6,7,8-tetrahydrofolate as cofactor. Post-translationally, phosphorylation on Ser-247 by MAPK is important for the inhibition of CLOCK-BMAL1-mediated transcriptional activity. Phosphorylation by CSNK1E requires interaction with PER1 or PER2. Phosphorylation at Ser-71 and Ser-280 by AMPK decreases protein stability. Phosphorylation at Ser-588 exhibits a robust circadian rhythm with a peak at CT8, increases protein stability, prevents SCF(FBXL3)-mediated degradation and is antagonized by interaction with PRKDC. In terms of processing, ubiquitinated by the SCF(FBXL3) and SCF(FBXL21) complexes, regulating the balance between degradation and stabilization. The SCF(FBXL3) complex is mainly nuclear and mediates ubiquitination and subsequent degradation of CRY1. In contrast, cytoplasmic SCF(FBXL21) complex-mediated ubiquitination leads to stabilize CRY1 and counteract the activity of the SCF(FBXL3) complex. The SCF(FBXL3) and SCF(FBXL21) complexes probably mediate ubiquitination at different Lys residues. Ubiquitination at Lys-11 and Lys-107 are specifically ubiquitinated by the SCF(FBXL21) complex but not by the SCF(FBXL3) complex. Ubiquitination may be inhibited by PER2. Deubiquitinated by USP7. Undergoes autophagy-mediated degradation in the liver in a time-dependent manner. Autophagic degradation of CRY1 (an inhibitor of gluconeogenesis) occurs during periods of reduced feeding allowing induction of gluconeogenesis and maintenance of blood glucose levels. Expressed in cones, amacrine cells, and retinal ganglion cells of the retina (at protein level). Expressed in all tissues examined including heart, brain, spleen, lung, liver, skeletal muscle, kidney and testis. Higher levels in brain, liver and testis. In the retina, highly expressed in the ganglion cell layer (GCL) and in the inner nuclear layer (INL). Evenly distributed in central and peripheral retina. In the brain, highly expressed in the suprachiasmatic nucleus (SCN). High levels in cerebral cortical layers particularly in the pyramidial cell layer of the hippocampus, the granular cell layer of the dentate gyrus (DG) and the pyramidal cell layer of the piriform cortex (PFC).

It localises to the cytoplasm. The protein resides in the nucleus. With respect to regulation, KL001 (N-[3-(9H-carbazol-9-yl)-2-hydroxypropyl]-N-(2-furanylmethyl)-methanesulfonamide) binds to CRY1 and stabilizes it by inhibiting FBXL3- and ubiquitin-dependent degradation of CRY1 resulting in lengthening of the circadian periods. KL001-mediated CRY1 stabilization can inhibit glucagon-induced gluconeogenesis in primary hepatocytes. Transcriptional repressor which forms a core component of the circadian clock. The circadian clock, an internal time-keeping system, regulates various physiological processes through the generation of approximately 24 hour circadian rhythms in gene expression, which are translated into rhythms in metabolism and behavior. It is derived from the Latin roots 'circa' (about) and 'diem' (day) and acts as an important regulator of a wide array of physiological functions including metabolism, sleep, body temperature, blood pressure, endocrine, immune, cardiovascular, and renal function. Consists of two major components: the central clock, residing in the suprachiasmatic nucleus (SCN) of the brain, and the peripheral clocks that are present in nearly every tissue and organ system. Both the central and peripheral clocks can be reset by environmental cues, also known as Zeitgebers (German for 'timegivers'). The predominant Zeitgeber for the central clock is light, which is sensed by retina and signals directly to the SCN. The central clock entrains the peripheral clocks through neuronal and hormonal signals, body temperature and feeding-related cues, aligning all clocks with the external light/dark cycle. Circadian rhythms allow an organism to achieve temporal homeostasis with its environment at the molecular level by regulating gene expression to create a peak of protein expression once every 24 hours to control when a particular physiological process is most active with respect to the solar day. Transcription and translation of core clock components (CLOCK, NPAS2, BMAL1, BMAL2, PER1, PER2, PER3, CRY1 and CRY2) plays a critical role in rhythm generation, whereas delays imposed by post-translational modifications (PTMs) are important for determining the period (tau) of the rhythms (tau refers to the period of a rhythm and is the length, in time, of one complete cycle). A diurnal rhythm is synchronized with the day/night cycle, while the ultradian and infradian rhythms have a period shorter and longer than 24 hours, respectively. Disruptions in the circadian rhythms contribute to the pathology of cardiovascular diseases, cancer, metabolic syndromes and aging. A transcription/translation feedback loop (TTFL) forms the core of the molecular circadian clock mechanism. Transcription factors, CLOCK or NPAS2 and BMAL1 or BMAL2, form the positive limb of the feedback loop, act in the form of a heterodimer and activate the transcription of core clock genes and clock-controlled genes (involved in key metabolic processes), harboring E-box elements (5'-CACGTG-3') within their promoters. The core clock genes: PER1/2/3 and CRY1/2 which are transcriptional repressors form the negative limb of the feedback loop and interact with the CLOCK|NPAS2-BMAL1|BMAL2 heterodimer inhibiting its activity and thereby negatively regulating their own expression. This heterodimer also activates nuclear receptors NR1D1/2 and RORA/B/G, which form a second feedback loop and which activate and repress BMAL1 transcription, respectively. CRY1 and CRY2 have redundant functions but also differential and selective contributions at least in defining the pace of the SCN circadian clock and its circadian transcriptional outputs. More potent transcriptional repressor in cerebellum and liver than CRY2, though more effective in lengthening the period of the SCN oscillator. On its side, CRY2 seems to play a critical role in tuning SCN circadian period by opposing the action of CRY1. With CRY2, is dispensable for circadian rhythm generation but necessary for the development of intercellular networks for rhythm synchrony. Capable of translocating circadian clock core proteins such as PER proteins to the nucleus. Interacts with CLOCK-BMAL1 independently of PER proteins and is found at CLOCK-BMAL1-bound sites, suggesting that CRY may act as a molecular gatekeeper to maintain CLOCK-BMAL1 in a poised and repressed state until the proper time for transcriptional activation. Represses the CLOCK-BMAL1 induced transcription of BHLHE40/DEC1, ATF4, MTA1, KLF10 and NAMPT. May repress circadian target genes expression in collaboration with HDAC1 and HDAC2 through histone deacetylation. Mediates the clock-control activation of ATR and modulates ATR-mediated DNA damage checkpoint. In liver, mediates circadian regulation of cAMP signaling and gluconeogenesis by binding to membrane-coupled G proteins and blocking glucagon-mediated increases in intracellular cAMP concentrations and CREB1 phosphorylation. Inhibits hepatic gluconeogenesis by decreasing nuclear FOXO1 levels that down-regulates gluconeogenic gene expression. Besides its role in the maintenance of the circadian clock, is also involved in the regulation of other processes. Represses glucocorticoid receptor NR3C1/GR-induced transcriptional activity by binding to glucocorticoid response elements (GREs). Plays a key role in glucose and lipid metabolism modulation, in part, through the transcriptional regulation of genes involved in these pathways, such as LEP or ACSL4. Represses PPARD and its target genes in the skeletal muscle and limits exercise capacity. Plays an essential role in the generation of circadian rhythms in the retina. Represses the transcriptional activity of NR1I2. This Mus musculus (Mouse) protein is Cryptochrome-1 (Cry1).